Here is a 177-residue protein sequence, read N- to C-terminus: Flavodoxin (177 aa).

The region spanning 4 to 173 is the Flavodoxin-like domain; that stretch reads IGIFFGSDTG…RIDTWLDKLK (170 aa).

This sequence belongs to the flavodoxin family. It depends on FMN as a cofactor.

In terms of biological role, low-potential electron donor to a number of redox enzymes. NifF is the electron donor to nitrogenase. In Enterobacter agglomerans (Erwinia herbicola), this protein is Flavodoxin (nifF).